We begin with the raw amino-acid sequence, 302 residues long: Probable 2-(5''-triphosphoribosyl)-3'-dephosphocoenzyme-A synthase 1 (302 aa).

The protein belongs to the CitG/MdcB family.

It carries out the reaction 3'-dephospho-CoA + ATP = 2'-(5''-triphospho-alpha-D-ribosyl)-3'-dephospho-CoA + adenine. The protein is Probable 2-(5''-triphosphoribosyl)-3'-dephosphocoenzyme-A synthase 1 of Salmonella typhi.